The primary structure comprises 78 residues: DNA-directed RNA polymerase subunit Rpo5 (78 aa).

Belongs to the archaeal Rpo5/eukaryotic RPB5 RNA polymerase subunit family. In terms of assembly, part of the RNA polymerase complex.

The protein resides in the cytoplasm. The enzyme catalyses RNA(n) + a ribonucleoside 5'-triphosphate = RNA(n+1) + diphosphate. Functionally, DNA-dependent RNA polymerase (RNAP) catalyzes the transcription of DNA into RNA using the four ribonucleoside triphosphates as substrates. In Methanococcus maripaludis (strain C6 / ATCC BAA-1332), this protein is DNA-directed RNA polymerase subunit Rpo5.